We begin with the raw amino-acid sequence, 439 residues long: Ribosomal protein uS12 methylthiotransferase RimO (439 aa).

The 111-residue stretch at 3–113 (HKVGFVSLGC…VVNAVHQHLP (111 aa)) folds into the MTTase N-terminal domain. Positions 12, 48, 77, 144, 148, and 151 each coordinate [4Fe-4S] cluster. Residues 130-367 (LTPRHYAYLK…MQVQAEISRN (238 aa)) form the Radical SAM core domain. One can recognise a TRAM domain in the interval 370–436 (KNKIGSTQTV…DYDLYGDLEY (67 aa)).

This sequence belongs to the methylthiotransferase family. RimO subfamily. It depends on [4Fe-4S] cluster as a cofactor.

The protein resides in the cytoplasm. The enzyme catalyses L-aspartate(89)-[ribosomal protein uS12]-hydrogen + (sulfur carrier)-SH + AH2 + 2 S-adenosyl-L-methionine = 3-methylsulfanyl-L-aspartate(89)-[ribosomal protein uS12]-hydrogen + (sulfur carrier)-H + 5'-deoxyadenosine + L-methionine + A + S-adenosyl-L-homocysteine + 2 H(+). Its function is as follows. Catalyzes the methylthiolation of an aspartic acid residue of ribosomal protein uS12. This Legionella pneumophila (strain Paris) protein is Ribosomal protein uS12 methylthiotransferase RimO.